A 369-amino-acid polypeptide reads, in one-letter code: Signal recognition particle receptor FtsY (369 aa).

The segment covering 20–42 has biased composition (basic and acidic residues); sequence GEENKKEPETRQTDQLESKKEET. The segment at 20–58 is disordered; sequence GEENKKEPETRQTDQLESKKEETIQQQQNVQQPQAENKI. A compositionally biased stretch (low complexity) spans 44-53; sequence QQQQNVQQPQ. Residues 180–187, 262–266, and 320–323 each bind GTP; these read GVNGVGKT, DTAGR, and TKVD.

The protein belongs to the GTP-binding SRP family. FtsY subfamily. In terms of assembly, part of the signal recognition particle protein translocation system, which is composed of SRP and FtsY.

Its subcellular location is the cell membrane. The protein resides in the cytoplasm. The catalysed reaction is GTP + H2O = GDP + phosphate + H(+). Functionally, involved in targeting and insertion of nascent membrane proteins into the cytoplasmic membrane. Acts as a receptor for the complex formed by the signal recognition particle (SRP) and the ribosome-nascent chain (RNC). The chain is Signal recognition particle receptor FtsY from Sulfolobus acidocaldarius (strain ATCC 33909 / DSM 639 / JCM 8929 / NBRC 15157 / NCIMB 11770).